Consider the following 346-residue polypeptide: MESRIKVLVVDDSAFMRKVITSMLESDPRLEVVGTARNGEDALKKRKTLAPDVMTLDVEMPVMDGIETLKRLMSENPLPIIIVSSTTKEGAENALTAMELGAVDFITKPSGPISLDLEKVRDLLIEKVASAPNVKLKPTSKKAPVVFRPLQQPVPFDKTIIVIGTSTGGPKALKQVLTKLPKDLPAPILIVQHMPAGFTESLANRLNSLCEIHVKEAEDGEIIRPGVAYIAPGGYHLETKRLGTSIALHLTKEEPRKGHRPSVDVLFESVSALSSIYKVAVIMTGMGSDGTEGLEQLKRGSCYAIAESEQSCVVFGMPKVAIERKLVDEVTHLELIADSIVRQCKR.

Residues 6 to 123 (KVLVVDDSAF…SLDLEKVRDL (118 aa)) enclose the Response regulatory domain. Aspartate 57 is subject to 4-aspartylphosphate. The CheB-type methylesterase domain occupies 155 to 346 (PFDKTIIVIG…ADSIVRQCKR (192 aa)). Residues serine 166, histidine 193, and aspartate 289 contribute to the active site.

The protein belongs to the CheB family. Post-translationally, phosphorylated by CheA. Phosphorylation of the N-terminal regulatory domain activates the methylesterase activity.

It is found in the cytoplasm. The catalysed reaction is [protein]-L-glutamate 5-O-methyl ester + H2O = L-glutamyl-[protein] + methanol + H(+). It carries out the reaction L-glutaminyl-[protein] + H2O = L-glutamyl-[protein] + NH4(+). Functionally, involved in chemotaxis. Part of a chemotaxis signal transduction system that modulates chemotaxis in response to various stimuli. Catalyzes the demethylation of specific methylglutamate residues introduced into the chemoreceptors (methyl-accepting chemotaxis proteins or MCP) by CheR. Also mediates the irreversible deamidation of specific glutamine residues to glutamic acid. This Halalkalibacterium halodurans (strain ATCC BAA-125 / DSM 18197 / FERM 7344 / JCM 9153 / C-125) (Bacillus halodurans) protein is Protein-glutamate methylesterase/protein-glutamine glutaminase.